We begin with the raw amino-acid sequence, 114 residues long: Large ribosomal subunit protein uL22 (114 aa).

Belongs to the universal ribosomal protein uL22 family. Part of the 50S ribosomal subunit.

In terms of biological role, this protein binds specifically to 23S rRNA; its binding is stimulated by other ribosomal proteins, e.g. L4, L17, and L20. It is important during the early stages of 50S assembly. It makes multiple contacts with different domains of the 23S rRNA in the assembled 50S subunit and ribosome. Functionally, the globular domain of the protein is located near the polypeptide exit tunnel on the outside of the subunit, while an extended beta-hairpin is found that lines the wall of the exit tunnel in the center of the 70S ribosome. The chain is Large ribosomal subunit protein uL22 from Ehrlichia canis (strain Jake).